We begin with the raw amino-acid sequence, 440 residues long: Ultraviolet-B receptor UVR8 (440 aa).

The residue at position 2 (alanine 2) is an N-acetylalanine. 8 RCC1 repeats span residues 2 to 31 (AEDM…VALL), 32 to 84 (SGDI…AYSQ), 86 to 137 (GMEV…AVTM), 139 to 189 (GEVQ…AVTE), 190 to 241 (DGDL…SVSY), 243 to 293 (GALY…ALTS), 294 to 345 (DGKL…AVTE), and 347 to 399 (NNVF…SGKS). Positions 397 to 423 (GKSWVSPAERYAVVPDETGLTDGSSKG) are required for interaction with COP1. The disordered stretch occupies residues 413 to 440 (ETGLTDGSSKGNGGDISVPQTDVKRVRI).

In terms of assembly, homodimer in the absence of UV-B, but absorption of UV-B induces monomerization of UVR8 and interaction with COP1. Interacts with RUP1, RUP2 and histone H2B.

It localises to the nucleus. The protein localises to the cytoplasm. It is found in the cytosol. UV-B specific signaling component that acts as a UV-B photoreceptor and plays a key role in establishing UV-protective responses in plants. Upon UV-B irradiation, UVR8 undergoes an immediate switch from homodimer to monomer, accumulates in the nucleus, interacts with the photomorphogenic repressor COP1 and regulates the expression of the transcription factor HY5 by associating with chromatin (through histone H2B binding) in the HY5 promoter region. UVR8 is involved in controlling aspects of leaf growth and morphogenesis in response to UV-B, is required for normal progression of endocycle and has a regulatory role in stomatal differentiation. Is required for plant circadian clock response to photomorphogenic UV-B light, partly through the transcriptional activation of responsive clock genes. Promotes photosynthetic efficiency at elevated levels of UV-B. Plays a role in mediating the effects of UV-B radiation on pathogen resistance by controlling the expression of the sinapate biosynthetic pathway. The two tryptophans, Trp-285 and Trp-233, serve collectively as the UV-B chromophore. The protein is Ultraviolet-B receptor UVR8 of Arabidopsis thaliana (Mouse-ear cress).